The sequence spans 444 residues: Tubulin beta chain (444 aa).

The GTP site is built by Gln11, Glu68, Ser137, Gly141, Thr142, Gly143, Asn203, and Asn225. Glu68 contacts Mg(2+). Residues 424-444 (QDATAEEEGEFDEDEEMDEMM) form a disordered region. Positions 427 to 444 (TAEEEGEFDEDEEMDEMM) are enriched in acidic residues.

The protein belongs to the tubulin family. Dimer of alpha and beta chains. A typical microtubule is a hollow water-filled tube with an outer diameter of 25 nm and an inner diameter of 15 nM. Alpha-beta heterodimers associate head-to-tail to form protofilaments running lengthwise along the microtubule wall with the beta-tubulin subunit facing the microtubule plus end conferring a structural polarity. Microtubules usually have 13 protofilaments but different protofilament numbers can be found in some organisms and specialized cells. Mg(2+) is required as a cofactor.

Its subcellular location is the cytoplasm. It is found in the cytoskeleton. Tubulin is the major constituent of microtubules, a cylinder consisting of laterally associated linear protofilaments composed of alpha- and beta-tubulin heterodimers. Microtubules grow by the addition of GTP-tubulin dimers to the microtubule end, where a stabilizing cap forms. Below the cap, tubulin dimers are in GDP-bound state, owing to GTPase activity of alpha-tubulin. The chain is Tubulin beta chain from Achlya klebsiana.